The sequence spans 472 residues: Siroheme synthase (472 aa).

The segment at Met-1–Met-204 is precorrin-2 dehydrogenase /sirohydrochlorin ferrochelatase. Residues Ser-22–Ile-23 and Leu-43–Glu-44 contribute to the NAD(+) site. Position 128 is a phosphoserine (Ser-128). Positions Gly-215–Ala-472 are uroporphyrinogen-III C-methyltransferase. Position 224 (Pro-224) interacts with S-adenosyl-L-methionine. The active-site Proton acceptor is the Asp-247. The Proton donor role is filled by Lys-269. S-adenosyl-L-methionine is bound by residues Gly-300–Asp-302, Ile-305, Thr-330–Ala-331, Met-382, and Gly-411.

In the N-terminal section; belongs to the precorrin-2 dehydrogenase / sirohydrochlorin ferrochelatase family. This sequence in the C-terminal section; belongs to the precorrin methyltransferase family.

It catalyses the reaction uroporphyrinogen III + 2 S-adenosyl-L-methionine = precorrin-2 + 2 S-adenosyl-L-homocysteine + H(+). It carries out the reaction precorrin-2 + NAD(+) = sirohydrochlorin + NADH + 2 H(+). The catalysed reaction is siroheme + 2 H(+) = sirohydrochlorin + Fe(2+). It functions in the pathway cofactor biosynthesis; adenosylcobalamin biosynthesis; precorrin-2 from uroporphyrinogen III: step 1/1. The protein operates within cofactor biosynthesis; adenosylcobalamin biosynthesis; sirohydrochlorin from precorrin-2: step 1/1. It participates in porphyrin-containing compound metabolism; siroheme biosynthesis; precorrin-2 from uroporphyrinogen III: step 1/1. Its pathway is porphyrin-containing compound metabolism; siroheme biosynthesis; siroheme from sirohydrochlorin: step 1/1. It functions in the pathway porphyrin-containing compound metabolism; siroheme biosynthesis; sirohydrochlorin from precorrin-2: step 1/1. In terms of biological role, multifunctional enzyme that catalyzes the SAM-dependent methylations of uroporphyrinogen III at position C-2 and C-7 to form precorrin-2 via precorrin-1. Then it catalyzes the NAD-dependent ring dehydrogenation of precorrin-2 to yield sirohydrochlorin. Finally, it catalyzes the ferrochelation of sirohydrochlorin to yield siroheme. This Psychromonas ingrahamii (strain DSM 17664 / CCUG 51855 / 37) protein is Siroheme synthase.